We begin with the raw amino-acid sequence, 489 residues long: Actin-related protein 4 (489 aa).

Positions 323–379 (KRTKPSGVNKSDKKVTPTEEKEQEAVSKSTSPAANSADTPNETGKRPLEEEKPPKEN) are disordered. Positions 332 to 347 (KSDKKVTPTEEKEQEA) are enriched in basic and acidic residues. Residues 348 to 364 (VSKSTSPAANSADTPNE) are compositionally biased toward polar residues. At serine 349 the chain carries Phosphoserine. The span at 365–379 (TGKRPLEEEKPPKEN) shows a compositional bias: basic and acidic residues.

This sequence belongs to the actin family. ARP4 subfamily. In terms of assembly, component of the NuA4 histone acetyltransferase complex composed of at least ACT1, ARP4, EAF3, EAF5, EAF6, EAF7, EPL1, ESA1, SWC4, TRA1, VID21, YAF9 and YNG2. Component of the chromatin-remodeling INO80 complex, at least composed of ARP4, ARP5, ARP8, RVB1, RVB2, TAF14, NHP10, IES1, IES3, IES4, IES6, ACT1, IES2, IES5 and INO80. Component of the SWR1 chromatin remodeling complex composed of at least ACT1, ARP4, RVB1, RVB2, ARP6, YAF9, VPS71, VPS72, SWC3, SWC4, SWC5, SWC7 and SWR1, and perhaps BDF1. Interacts with histones H4 (HHF1 and HHF2), H3 (HHT1 and HHT2) and H2A (HTA1 and HTA2).

It is found in the nucleus. Functionally, chromatin interaction component of the NuA4 histone acetyltransferase complex which is involved in transcriptional activation of selected genes principally by acetylation of nucleosomal histone H4 and H2A. The NuA4 complex is also involved in DNA repair. ARP4 recognizes H2AS128ph (gamma-H2A) and is required for NuA4 complex integrity. Component of the SWR1 complex which mediates the ATP-dependent exchange of histone H2A for the H2A variant HZT1 leading to transcriptional regulation of selected genes by chromatin remodeling. Component of the INO80 complex which remodels chromatin by shifting nucleosomes. Its ability to induce transcription of some phosphate-responsive genes is modulated by inositol polyphosphates. The INO80 complex is involved in DNA repair by associating to gamma-H2A as a response to DNA damage. The protein is Actin-related protein 4 (ARP4) of Saccharomyces cerevisiae (strain ATCC 204508 / S288c) (Baker's yeast).